Here is a 180-residue protein sequence, read N- to C-terminus: UPF0149 protein XOO1028 (180 aa).

Belongs to the UPF0149 family.

This chain is UPF0149 protein XOO1028, found in Xanthomonas oryzae pv. oryzae (strain MAFF 311018).